The following is a 460-amino-acid chain: Ammonium transporter Rh type C (460 aa).

Residues 1-9 (MIWNTNLRW) lie on the Cytoplasmic side of the membrane. The helical transmembrane segment at 10-30 (RLPVACLLLEVALIALFGVFV) threads the bilayer. Over 31 to 61 (RYDMDADPHWVQEKVIKNLSTDLENEFYYRY) the chain is Extracellular. Asparagine 48 carries an N-linked (GlcNAc...) asparagine glycan. Residues 62-82 (PSFQDVHVMIFVGFGFLMTFL) traverse the membrane as a helical segment. The Cytoplasmic segment spans residues 83-89 (QRYGYSS). The chain crosses the membrane as a helical span at residues 90 to 110 (VGFNFLLAAFGIQWALLMQGW). Residues 111-125 (LQSFDGRYILVDLEN) lie on the Extracellular side of the membrane. Residues 126 to 145 (LINADFCVGSVCVAFGAVLG) form a helical membrane-spanning segment. Topologically, residues 146–151 (KVSPVQ) are cytoplasmic. The chain crosses the membrane as a helical span at residues 152–174 (LLIMTLFQVTLFSINEYILLNLL). The Extracellular portion of the chain corresponds to 175-179 (EVKDS). A helical membrane pass occupies residues 180–200 (GGSMTIHAFGAYFGLTVAWIL). Topologically, residues 201 to 219 (YRPNLHLSKERQSSTYHSD) are cytoplasmic. Residues 220–240 (LFAMIGTLFLWMYWPSFNSAI) form a helical membrane-spanning segment. Topologically, residues 241 to 251 (SNHGDAQHRAA) are extracellular. The helical transmembrane segment at 252-272 (INTYCSLAACVLTSVALSSAL) threads the bilayer. Residues 273 to 285 (HRKGKLDMVHIQN) lie on the Cytoplasmic side of the membrane. The chain crosses the membrane as a helical span at residues 286–303 (ATLAGGVGLGTVAELMVL). Residues 304–306 (PFG) are Extracellular-facing. Residues 307–329 (SLIIGFVCGIVSTLGFVYLTPFL) traverse the membrane as a helical segment. Topologically, residues 330–346 (ESRLHIQDTCGVHNLHG) are cytoplasmic. A helical membrane pass occupies residues 347–367 (IPGIIGGIAGAVTASIANIDL). Over 368 to 396 (YGEEGLAYAFGIERSKLNWSPNMQGRFQA) the chain is Extracellular. The chain crosses the membrane as a helical span at residues 397 to 417 (AGLFVSLAMALVGGVIVGVIL). Residues 418 to 460 (RLPFWGQAPDENCFEDAVYWEIPKEPKSTALRSEDSSIKPPEP) are Cytoplasmic-facing.

This sequence belongs to the ammonium transporter (TC 2.A.49) family. Rh subfamily. In terms of assembly, homotrimer. Post-translationally, N-glycosylated.

It localises to the apical cell membrane. It catalyses the reaction NH4(+)(in) = NH4(+)(out). The enzyme catalyses methylamine(out) = methylamine(in). The catalysed reaction is CO2(out) = CO2(in). Functionally, ammonium transporter involved in the maintenance of acid-base homeostasis. Transports ammonium and its related derivative methylammonium across the plasma membrane of epithelial cells likely contributing to renal transepithelial ammonia transport and ammonia metabolism. Postulated to primarily mediate an electroneutral bidirectional transport of NH3 ammonia species according to a mechanism that implies interaction of an NH4(+) ion with acidic residues of the pore entry followed by dissociation of NH4(+) into NH3 and H(+). As a result NH3 transits through the central pore and is protonated on the extracellular side reforming NH4(+). May act as a CO2 channel providing for renal acid secretion. The sequence is that of Ammonium transporter Rh type C (RHCG) from Bos taurus (Bovine).